The primary structure comprises 190 residues: Peptidyl-tRNA hydrolase (190 aa).

TRNA is bound at residue phenylalanine 14. Catalysis depends on histidine 19, which acts as the Proton acceptor. Positions 64, 66, and 112 each coordinate tRNA.

The protein belongs to the PTH family. Monomer.

The protein localises to the cytoplasm. It carries out the reaction an N-acyl-L-alpha-aminoacyl-tRNA + H2O = an N-acyl-L-amino acid + a tRNA + H(+). Its function is as follows. Hydrolyzes ribosome-free peptidyl-tRNAs (with 1 or more amino acids incorporated), which drop off the ribosome during protein synthesis, or as a result of ribosome stalling. Catalyzes the release of premature peptidyl moieties from peptidyl-tRNA molecules trapped in stalled 50S ribosomal subunits, and thus maintains levels of free tRNAs and 50S ribosomes. The chain is Peptidyl-tRNA hydrolase from Staphylococcus aureus (strain bovine RF122 / ET3-1).